A 224-amino-acid polypeptide reads, in one-letter code: Flagellar L-ring protein (224 aa).

Residues 1 to 15 (MARYFILAVALLLTA) form the signal peptide. C16 carries N-palmitoyl cysteine lipidation. Residue C16 is the site of S-diacylglycerol cysteine attachment.

This sequence belongs to the FlgH family. As to quaternary structure, the basal body constitutes a major portion of the flagellar organelle and consists of four rings (L,P,S, and M) mounted on a central rod.

The protein resides in the cell outer membrane. The protein localises to the bacterial flagellum basal body. Assembles around the rod to form the L-ring and probably protects the motor/basal body from shearing forces during rotation. This Shewanella sp. (strain MR-7) protein is Flagellar L-ring protein.